The chain runs to 417 residues: Testis-specific Y-encoded-like protein 5 (417 aa).

Basic residues predominate over residues Met-1–Val-25. Disordered regions lie at residues Met-1 to Ala-55, Ala-93 to Leu-112, Gly-127 to Met-202, and Lys-391 to Asn-417. The span at Pro-27–Asp-37 shows a compositional bias: basic and acidic residues. Residues Ala-93–Arg-103 are compositionally biased toward low complexity. Residues Gly-182–Ala-191 are compositionally biased toward basic and acidic residues. Residues Met-406 to Asn-417 show a composition bias toward polar residues.

It belongs to the nucleosome assembly protein (NAP) family. As to quaternary structure, interacts with USP7.

Involved in modulation of cell growth and cellular response to gamma radiation probably via regulation of the Akt signaling pathway. Involved in regulation of p53/TP53. Suppresses p53/TP53 protein levels and promotes its ubiquitination; the function is dependent on USP7 and independent on MDM2. Proposed to displace p53/TP53 from interaction with USP7. The sequence is that of Testis-specific Y-encoded-like protein 5 (TSPYL5) from Homo sapiens (Human).